The primary structure comprises 248 residues: 14-3-3 protein homolog 2 (248 aa).

Belongs to the 14-3-3 family.

The polypeptide is 14-3-3 protein homolog 2 (Echinococcus granulosus (Hydatid tapeworm)).